The primary structure comprises 750 residues: Photosystem I P700 chlorophyll a apoprotein A1 (750 aa).

8 helical membrane passes run V72–A95, L158–H181, M197–L221, T293–Y311, W348–Y371, L387–V413, A435–H457, and F532–L550. [4Fe-4S] cluster contacts are provided by C574 and C583. 2 helical membrane passes run H590 to W611 and L664 to F686. H675 is a binding site for chlorophyll a'. 2 residues coordinate chlorophyll a: M683 and Y691. W692 contacts phylloquinone. The helical transmembrane segment at A724–A744 threads the bilayer.

The protein belongs to the PsaA/PsaB family. As to quaternary structure, the PsaA/B heterodimer binds the P700 chlorophyll special pair and subsequent electron acceptors. PSI consists of a core antenna complex that captures photons, and an electron transfer chain that converts photonic excitation into a charge separation. The eukaryotic PSI reaction center is composed of at least 11 subunits. The cofactor is P700 is a chlorophyll a/chlorophyll a' dimer, A0 is one or more chlorophyll a, A1 is one or both phylloquinones and FX is a shared 4Fe-4S iron-sulfur center..

It is found in the plastid. It localises to the chloroplast thylakoid membrane. The catalysed reaction is reduced [plastocyanin] + hnu + oxidized [2Fe-2S]-[ferredoxin] = oxidized [plastocyanin] + reduced [2Fe-2S]-[ferredoxin]. Its function is as follows. PsaA and PsaB bind P700, the primary electron donor of photosystem I (PSI), as well as the electron acceptors A0, A1 and FX. PSI is a plastocyanin-ferredoxin oxidoreductase, converting photonic excitation into a charge separation, which transfers an electron from the donor P700 chlorophyll pair to the spectroscopically characterized acceptors A0, A1, FX, FA and FB in turn. Oxidized P700 is reduced on the lumenal side of the thylakoid membrane by plastocyanin. The sequence is that of Photosystem I P700 chlorophyll a apoprotein A1 from Mesostigma viride (Green alga).